The following is a 273-amino-acid chain: Cysteine protease S273R (273 aa).

Catalysis depends on residues histidine 168 and asparagine 187. Glutamine 226 contributes to the substrate binding site. Cysteine 232 acts as the Nucleophile in catalysis.

This sequence belongs to the peptidase C63 family.

The protein resides in the host cytoplasm. Its subcellular location is the virion. Functionally, cysteine protease that plays several role during infection including processing of the structural polyprotein or inhibition of the host immune response. Catalyzes the maturation of the pp220 and pp62 polyprotein precursors into core-shell proteins. Plays a role in the disruption of host pyroptosis via specific cleavage of gasdermin D/GSDMD. In addition, strongly decreases the host cGAS-STING signaling by targeting IKBKE via its enzymatic activity. Also impairs host FOXJ1-mediated antiviral effect via degradation of FOXJ1. This African swine fever virus (isolate Tick/Malawi/Lil 20-1/1983) (ASFV) protein is Cysteine protease S273R.